Reading from the N-terminus, the 258-residue chain is UPF0246 protein plu0566 (258 aa).

Belongs to the UPF0246 family.

This is UPF0246 protein plu0566 from Photorhabdus laumondii subsp. laumondii (strain DSM 15139 / CIP 105565 / TT01) (Photorhabdus luminescens subsp. laumondii).